Here is a 668-residue protein sequence, read N- to C-terminus: Fructose-1,6-bisphosphatase class 3 (668 aa).

This sequence belongs to the FBPase class 3 family. The cofactor is Mn(2+).

It carries out the reaction beta-D-fructose 1,6-bisphosphate + H2O = beta-D-fructose 6-phosphate + phosphate. It functions in the pathway carbohydrate biosynthesis; gluconeogenesis. The sequence is that of Fructose-1,6-bisphosphatase class 3 from Clostridium botulinum (strain Okra / Type B1).